A 225-amino-acid chain; its full sequence is Protein E26 (225 aa).

As to quaternary structure, interacts with proteins IE0 and IE1. Interacts with protein FP25K. Interacts with host importin alpha-16. In terms of processing, palmitoylated.

The protein localises to the host nucleus inner membrane. Its subcellular location is the virion. It localises to the host cytoplasm. It is found in the host nucleus. Plays a role in the sorting of ODV envelope proteins to the host inner nuclear membrane. May facilitate the fusion and release of nucleocapsids into the cytoplasm. Modulates the expression levels of IE0 and IE1. The sequence is that of Protein E26 (DA26) from Lepidoptera (butterflies and moths).